The primary structure comprises 433 residues: tRNA-2-methylthio-N(6)-dimethylallyladenosine synthase (433 aa).

One can recognise an MTTase N-terminal domain in the interval 4-119 (KKLFIQTLGC…ITQAIKTPKF (116 aa)). Cys13, Cys50, Cys82, Cys151, Cys155, and Cys158 together coordinate [4Fe-4S] cluster. The 234-residue stretch at 137 to 370 (RNSIYKSYIN…QNRHSEILDE (234 aa)) folds into the Radical SAM core domain. Residues 373-433 (KKQENKTFKV…KRMVLYGEIV (61 aa)) form the TRAM domain.

Belongs to the methylthiotransferase family. MiaB subfamily. Monomer. It depends on [4Fe-4S] cluster as a cofactor.

It localises to the cytoplasm. It catalyses the reaction N(6)-dimethylallyladenosine(37) in tRNA + (sulfur carrier)-SH + AH2 + 2 S-adenosyl-L-methionine = 2-methylsulfanyl-N(6)-dimethylallyladenosine(37) in tRNA + (sulfur carrier)-H + 5'-deoxyadenosine + L-methionine + A + S-adenosyl-L-homocysteine + 2 H(+). Its function is as follows. Catalyzes the methylthiolation of N6-(dimethylallyl)adenosine (i(6)A), leading to the formation of 2-methylthio-N6-(dimethylallyl)adenosine (ms(2)i(6)A) at position 37 in tRNAs that read codons beginning with uridine. In Campylobacter jejuni (strain RM1221), this protein is tRNA-2-methylthio-N(6)-dimethylallyladenosine synthase.